The primary structure comprises 458 residues: Chromosomal replication initiator protein DnaA (458 aa).

The tract at residues 1–93 is domain I, interacts with DnaA modulators; it reads MKTELSEVWQ…NVIEDPAAEP (93 aa). A domain II region spans residues 94 to 119; sequence VDAPNVADLPAGTSAPAAEQNARLLG. The segment at 120-336 is domain III, AAA+ region; it reads YINPKYTFET…GALTRVVAYA (217 aa). Glycine 164, glycine 166, lysine 167, and threonine 168 together coordinate ATP. Residues 337-458 form a domain IV, binds dsDNA region; that stretch reads NMLKCPLTYD…EQLIARIRAE (122 aa).

This sequence belongs to the DnaA family. Oligomerizes as a right-handed, spiral filament on DNA at oriC.

The protein resides in the cytoplasm. Plays an essential role in the initiation and regulation of chromosomal replication. ATP-DnaA binds to the origin of replication (oriC) to initiate formation of the DNA replication initiation complex once per cell cycle. Binds the DnaA box (a 9 base pair repeat at the origin) and separates the double-stranded (ds)DNA. Forms a right-handed helical filament on oriC DNA; dsDNA binds to the exterior of the filament while single-stranded (ss)DNA is stabiized in the filament's interior. The ATP-DnaA-oriC complex binds and stabilizes one strand of the AT-rich DNA unwinding element (DUE), permitting loading of DNA polymerase. After initiation quickly degrades to an ADP-DnaA complex that is not apt for DNA replication. Binds acidic phospholipids. The polypeptide is Chromosomal replication initiator protein DnaA (Symbiobacterium thermophilum (strain DSM 24528 / JCM 14929 / IAM 14863 / T)).